Consider the following 185-residue polypeptide: Ribonuclease HII (185 aa).

Residues 1–185 (MIILGIDEAG…KSYKPIQLLL (185 aa)) form the RNase H type-2 domain. A divalent metal cation is bound by residues D7, E8, and D99.

The protein belongs to the RNase HII family. Mn(2+) is required as a cofactor. It depends on Mg(2+) as a cofactor.

Its subcellular location is the cytoplasm. The enzyme catalyses Endonucleolytic cleavage to 5'-phosphomonoester.. Functionally, endonuclease that specifically degrades the RNA of RNA-DNA hybrids. This is Ribonuclease HII from Francisella philomiragia subsp. philomiragia (strain ATCC 25017 / CCUG 19701 / FSC 153 / O#319-036).